Consider the following 1159-residue polypeptide: Nucleoporin nup124 (1159 aa).

Positions Met-1 to Lys-13 are enriched in polar residues. Disordered stretches follow at residues Met-1 to Pro-28, Phe-44 to Pro-77, His-106 to Pro-125, and Thr-183 to Arg-273. Basic and acidic residues-rich tracts occupy residues Leu-48–Ser-62 and His-106–Gln-119. Ser-211 carries the post-translational modification Phosphoserine. Residues Asn-226–Asn-239 show a composition bias toward polar residues. Residues Asp-240–Ala-260 are compositionally biased toward basic and acidic residues. Residues His-263 to Arg-273 are compositionally biased toward basic residues. Residue Ser-380 is modified to Phosphoserine. Over residues Asp-426–Ala-441 the composition is skewed to basic and acidic residues. Disordered stretches follow at residues Asp-426 to Asn-715, Glu-746 to Ser-780, and Glu-794 to Arg-1159. The segment covering Pro-442–Glu-453 has biased composition (polar residues). The residue at position 465 (Ser-465) is a Phosphoserine. Positions Phe-480–Leu-494 are enriched in basic and acidic residues. A compositionally biased stretch (polar residues) spans Pro-528–Ser-549. The residue at position 546 (Ser-546) is a Phosphoserine. Basic and acidic residues predominate over residues Pro-550–Asn-560. Over residues Pro-590 to Phe-626 the composition is skewed to polar residues. Residues Ala-642–Ser-656 show a composition bias toward low complexity. Polar residues-rich tracts occupy residues Gly-657–Thr-672 and Asp-696–Asn-715. The segment covering Glu-746–Val-758 has biased composition (basic and acidic residues). Polar residues-rich tracts occupy residues Ser-771 to Ser-780 and Glu-798 to Lys-814. Basic and acidic residues predominate over residues Arg-815–Lys-824. Polar residues predominate over residues Phe-830–Val-861. Low complexity predominate over residues Ala-863–Ser-879. Over residues Thr-880 to Lys-908 the composition is skewed to polar residues. A compositionally biased stretch (low complexity) spans Ala-909–Phe-926. A compositionally biased stretch (polar residues) spans Gly-927 to Gly-947. The span at Thr-948–Ala-963 shows a compositional bias: low complexity. 5 stretches are compositionally biased toward polar residues: residues Gly-1001 to Pro-1019, Ile-1042 to Ser-1064, Asn-1074 to Gln-1087, Glu-1095 to Phe-1108, and Ser-1116 to Ala-1144.

It to yeast nucleoporins NUP1 and NUP2.

The protein resides in the nucleus. Its subcellular location is the nuclear pore complex. Functionally, nucleoporins may be involved in both binding and translocation of the proteins during nucleocytoplasmic transport. In S.pombe it is required for the nuclear localization of retrotransposon tf1. The chain is Nucleoporin nup124 (nup124) from Schizosaccharomyces pombe (strain 972 / ATCC 24843) (Fission yeast).